Reading from the N-terminus, the 104-residue chain is Large ribosomal subunit protein uL24 (104 aa).

This sequence belongs to the universal ribosomal protein uL24 family. In terms of assembly, part of the 50S ribosomal subunit.

Its function is as follows. One of two assembly initiator proteins, it binds directly to the 5'-end of the 23S rRNA, where it nucleates assembly of the 50S subunit. Functionally, one of the proteins that surrounds the polypeptide exit tunnel on the outside of the subunit. This is Large ribosomal subunit protein uL24 from Clostridium botulinum (strain Eklund 17B / Type B).